Reading from the N-terminus, the 249-residue chain is Small ribosomal subunit protein uS3 (249 aa).

The KH type-2 domain maps to 39-108 (IRQLINKKLA…TVAVNVAEIP (70 aa)). The tract at residues 214–249 (ETFARPQRRDRDERRPEGGDRPARRRPTARRRTGGE) is disordered. Residues 220–235 (QRRDRDERRPEGGDRP) are compositionally biased toward basic and acidic residues. Positions 236–249 (ARRRPTARRRTGGE) are enriched in basic residues.

This sequence belongs to the universal ribosomal protein uS3 family. In terms of assembly, part of the 30S ribosomal subunit. Forms a tight complex with proteins S10 and S14.

Binds the lower part of the 30S subunit head. Binds mRNA in the 70S ribosome, positioning it for translation. The sequence is that of Small ribosomal subunit protein uS3 from Deinococcus radiodurans (strain ATCC 13939 / DSM 20539 / JCM 16871 / CCUG 27074 / LMG 4051 / NBRC 15346 / NCIMB 9279 / VKM B-1422 / R1).